The chain runs to 294 residues: Maltose/maltodextrin import ATP-binding protein MalK (294 aa).

Residues 4-233 enclose the ABC transporter domain; that stretch reads VQLRNVTKAW…PADRFVAGFI (230 aa). Position 36-43 (36-43) interacts with ATP; that stretch reads GPSGCGKS.

This sequence belongs to the ABC transporter superfamily. Maltooligosaccharide importer (TC 3.A.1.1.1) family. In terms of assembly, the complex is composed of two ATP-binding proteins (MalK), two transmembrane proteins (MalG and MalK) and a solute-binding protein (MalE).

It is found in the cell inner membrane. It carries out the reaction D-maltose(out) + ATP + H2O = D-maltose(in) + ADP + phosphate + H(+). Functionally, part of the ABC transporter complex MalEFGK involved in maltose/maltodextrin import. Responsible for energy coupling to the transport system. In Klebsiella aerogenes (Enterobacter aerogenes), this protein is Maltose/maltodextrin import ATP-binding protein MalK.